A 280-amino-acid polypeptide reads, in one-letter code: uncharacterized protein (280 aa).

This sequence belongs to the metallo-dependent hydrolases superfamily.

This is an uncharacterized protein from Methanocaldococcus jannaschii (strain ATCC 43067 / DSM 2661 / JAL-1 / JCM 10045 / NBRC 100440) (Methanococcus jannaschii).